A 748-amino-acid polypeptide reads, in one-letter code: Peroxisomal membrane protein PEX14 (748 aa).

Disordered regions lie at residues 1 to 138 (MDND…LSPS) and 190 to 228 (GNIN…NNNN). Over 1–277 (MDNDDINNNN…IAQLMMNNNR (277 aa)) the chain is Peroxisomal. The span at 7-30 (NNNNNNNNNNNNNNNSQELDQQEQ) shows a compositional bias: low complexity. Residues 8–60 (NNNNNNNNNNNNNNSQELDQQEQTQEEITKQRIQKRKEEAKRIMEERKKREQQ) are a coiled coil. Over residues 43–59 (RKEEAKRIMEERKKREQ) the composition is skewed to basic and acidic residues. Polar residues predominate over residues 86 to 104 (PQRQQQYDDNDEPPQQQQY). Composition is skewed to low complexity over residues 122–131 (TTSSTASAAT), 190–209 (GNIN…NSIS), and 218–228 (NNNNNSSNNNN). A coiled-coil region spans residues 241-277 (QQHQQQQQMALTQIQSYQKRLEADDQRIAQLMMNNNR). The helical transmembrane segment at 278-300 (FSWNSFLFSVTAIVGAASGLAYL) threads the bilayer. Over 301 to 748 (TSNYIIPFLN…INNTDSSVEK (448 aa)) the chain is Cytoplasmic. Residues 316-413 (KDASANMDKK…IGNKENSNNS (98 aa)) are a coiled coil. Disordered stretches follow at residues 406-673 (NKEN…ETPY) and 685-748 (KQGK…SVEK). 2 stretches are compositionally biased toward low complexity: residues 409-424 (NSNN…NNNN) and 445-476 (STNN…PGSN). Polar residues predominate over residues 510–527 (SWQQKSSNPPSDLSNAND). Composition is skewed to low complexity over residues 528 to 542 (KSSP…PTKP) and 569 to 611 (TTTT…NNNN). The span at 612–627 (TTIASTSNESNNSKVE) shows a compositional bias: polar residues. Residues 628 to 661 (TTSNDSDKSTSPSSSSNNTTSTTATTTTITSAST) show a composition bias toward low complexity. Residues 710–723 (SAKERPKKPWERDT) show a composition bias toward basic and acidic residues. Positions 724-748 (LTSVTNNLSVEETQTINNTDSSVEK) are enriched in polar residues.

Belongs to the peroxin-14 family. In terms of assembly, interacts with PEX13; forming the PEX13-PEX14 docking complex. Interacts with PEX5 (via WxxxF/Y motifs).

The protein localises to the peroxisome membrane. Functionally, component of the PEX13-PEX14 docking complex, a translocon channel that specifically mediates the import of peroxisomal cargo proteins bound to PEX5 receptor. The PEX13-PEX14 docking complex forms a large import pore which can be opened to a diameter of about 9 nm. Mechanistically, PEX5 receptor along with cargo proteins associates with the PEX14 subunit of the PEX13-PEX14 docking complex in the cytosol, leading to the insertion of the receptor into the organelle membrane with the concomitant translocation of the cargo into the peroxisome matrix. This Dictyostelium discoideum (Social amoeba) protein is Peroxisomal membrane protein PEX14 (pex14).